The sequence spans 1059 residues: WD repeat-containing protein on Y chromosome (1059 aa).

11 WD repeats span residues 121–161 (DFCP…ALTA), 170–209 (RSKT…FTLK), 214–256 (RLPQ…KVTT), 344–383 (CVPR…KPSV), 387–426 (GHTS…LLQT), 476–515 (SHTK…KMTI), 528–567 (LEPV…CMRT), 616–658 (QHSD…RRYD), 714–759 (MRQL…GFKG), 766–805 (MAGD…IPNE), and 849–888 (AHRA…IGLL).

The chain is WD repeat-containing protein on Y chromosome from Anopheles gambiae (African malaria mosquito).